The following is a 602-amino-acid chain: MVNNMTDLTAHDAAPAWQTRDHLDDPVIGELRNRFGPDAFTVQPTRTGVPVVWVKREQLLEVGDFLKKLPKPYVMLFDLHGMDERLRTHRDGLPAADFSVFYHLISIDRNRDIMLKVALSENDLHLPTFTKLFPNANWYERETWEMFGITFDGHPNLRRIMMPPTWEGHPLRKDYPARATEFDPFELTKAKQDLEMEALTFKPEEWGMKRGTDNEDFMFLNLGPNHPSAHGAFRIILQLDGEEIVDCVPDIGYHHRGAEKMGERQSWHSYIPYTDRIEYLGGCVNEMPYVLAVEKLAGITVPDRVNVIRVMLSELFRINSHLLYISTFIQDVGAMTPVFFAFTDRQKIYDLVEAITGFRMHPAWFRIGGVAHDLPRGWDRLLREFLEWMPKRLDSYEKAALRNTILKGRSVGVAAYTAKEALEWGTTGAGLRATGIDFDVRKWRPYSGYENFDFEVPTGGGVSDCYTRVMLKVEELRQSLRILQQCLDNMPEGPFKADHPLTTPPPKERTLQHIETLITHFLQVSWGPVMPANESFQMIEATKGINSYYLTSDGSTMSYRTRVRTPSFAHLQQIPSAIRGSLVSDLIVYLGSIDFVMSDVDR.

The interval methionine 1–glutamine 192 is NADH dehydrogenase I subunit C. The NADH dehydrogenase I subunit D stretch occupies residues aspartate 216–arginine 602.

It in the N-terminal section; belongs to the complex I 30 kDa subunit family. The protein in the C-terminal section; belongs to the complex I 49 kDa subunit family. As to quaternary structure, NDH-1 is composed of 13 different subunits. Subunits NuoB, CD, E, F, and G constitute the peripheral sector of the complex.

The protein resides in the cell inner membrane. The enzyme catalyses a quinone + NADH + 5 H(+)(in) = a quinol + NAD(+) + 4 H(+)(out). In terms of biological role, NDH-1 shuttles electrons from NADH, via FMN and iron-sulfur (Fe-S) centers, to quinones in the respiratory chain. The immediate electron acceptor for the enzyme in this species is believed to be ubiquinone. Couples the redox reaction to proton translocation (for every two electrons transferred, four hydrogen ions are translocated across the cytoplasmic membrane), and thus conserves the redox energy in a proton gradient. In Klebsiella pneumoniae subsp. pneumoniae (strain ATCC 700721 / MGH 78578), this protein is NADH-quinone oxidoreductase subunit C/D.